The following is a 234-amino-acid chain: tRNA (guanine-N(1)-)-methyltransferase (234 aa).

S-adenosyl-L-methionine is bound by residues glycine 115 and 135 to 140 (VGDYIL).

Belongs to the RNA methyltransferase TrmD family. As to quaternary structure, homodimer.

Its subcellular location is the cytoplasm. It carries out the reaction guanosine(37) in tRNA + S-adenosyl-L-methionine = N(1)-methylguanosine(37) in tRNA + S-adenosyl-L-homocysteine + H(+). In terms of biological role, specifically methylates guanosine-37 in various tRNAs. This is tRNA (guanine-N(1)-)-methyltransferase from Rickettsia africae (strain ESF-5).